The primary structure comprises 833 residues: G-type lectin S-receptor-like serine/threonine-protein kinase RKS1 (833 aa).

The first 18 residues, 1–18 (MKVVFVIFFFFLFQFCIS), serve as a signal peptide directing secretion. The Bulb-type lectin domain occupies 19 to 144 (VDTIMRRQSL…VTGRSFWESF (126 aa)). Residues 19 to 440 (VDTIMRRQSL…NGLSGKRRVL (422 aa)) are Extracellular-facing. Residues Asn-79, Asn-92, Asn-100, Asn-109, Asn-228, and Asn-256 are each glycosylated (N-linked (GlcNAc...) asparagine). The EGF-like domain maps to 280–330 (PKEQCDNYAHCGPNGYCDSPSSKTFECTCLPGFEPKFPRHWFLRDSSGGCT). Disulfide bonds link Cys-284–Cys-296, Cys-290–Cys-306, and Cys-308–Cys-329. The region spanning 338 to 421 (CSEKDGFVKL…SGQDFYIRVD (84 aa)) is the PAN domain. N-linked (GlcNAc...) asparagine glycans are attached at residues Asn-363 and Asn-376. Cystine bridges form between Cys-369-Cys-396 and Cys-373-Cys-379. A helical membrane pass occupies residues 441-461 (LILISLIAAVMLLTVILFCVV). Residues 462–833 (RERRKSNRHR…DVTFSDIQGR (372 aa)) lie on the Cytoplasmic side of the membrane. The Protein kinase domain maps to 515–800 (FSSQNKLGAG…NLPNPKHPAF (286 aa)). ATP is bound by residues 521-529 (LGAGGFGPV) and Lys-543. 2 positions are modified to phosphoserine: Ser-549 and Ser-564. Residues 604–621 (EQRAELDWPKRMEIVRGI) form a caM-binding region. Asp-640 (proton acceptor) is an active-site residue. Phosphoserine is present on residues Ser-644 and Ser-657. Thr-674 is subject to Phosphothreonine. Residues Ser-717 and Ser-821 each carry the phosphoserine modification.

The protein belongs to the protein kinase superfamily. Ser/Thr protein kinase family.

The protein resides in the cell membrane. The catalysed reaction is L-seryl-[protein] + ATP = O-phospho-L-seryl-[protein] + ADP + H(+). It catalyses the reaction L-threonyl-[protein] + ATP = O-phospho-L-threonyl-[protein] + ADP + H(+). In Arabidopsis thaliana (Mouse-ear cress), this protein is G-type lectin S-receptor-like serine/threonine-protein kinase RKS1 (RKS1).